Consider the following 773-residue polypeptide: DNA gyrase subunit B (773 aa).

The Toprim domain maps to 416–530 (SEIFLVEGDS…QGHVFIAQAP (115 aa)). Residues Glu-422, Asp-495, and Asp-497 each coordinate Mg(2+).

The protein belongs to the type II topoisomerase GyrB family. Heterotetramer, composed of two GyrA and two GyrB chains. In the heterotetramer, GyrA contains the active site tyrosine that forms a transient covalent intermediate with DNA, while GyrB binds cofactors and catalyzes ATP hydrolysis. Mg(2+) serves as cofactor. The cofactor is Mn(2+). Requires Ca(2+) as cofactor.

The protein resides in the cytoplasm. The catalysed reaction is ATP-dependent breakage, passage and rejoining of double-stranded DNA.. In terms of biological role, a type II topoisomerase that negatively supercoils closed circular double-stranded (ds) DNA in an ATP-dependent manner to modulate DNA topology and maintain chromosomes in an underwound state. Negative supercoiling favors strand separation, and DNA replication, transcription, recombination and repair, all of which involve strand separation. Also able to catalyze the interconversion of other topological isomers of dsDNA rings, including catenanes and knotted rings. Type II topoisomerases break and join 2 DNA strands simultaneously in an ATP-dependent manner. This is DNA gyrase subunit B from Helicobacter pylori (strain J99 / ATCC 700824) (Campylobacter pylori J99).